The primary structure comprises 304 residues: Probable 5-dehydro-4-deoxyglucarate dehydratase (304 aa).

The protein belongs to the DapA family.

It carries out the reaction 5-dehydro-4-deoxy-D-glucarate + H(+) = 2,5-dioxopentanoate + CO2 + H2O. It functions in the pathway carbohydrate acid metabolism; D-glucarate degradation; 2,5-dioxopentanoate from D-glucarate: step 2/2. This Rhodococcus opacus (strain B4) protein is Probable 5-dehydro-4-deoxyglucarate dehydratase.